The chain runs to 350 residues: Putative F-box protein At1g23770 (350 aa).

A compositionally biased stretch (polar residues) spans 1 to 15 (MDTGFADSNNDSSPG). Residues 1–29 (MDTGFADSNNDSSPGEGSKRGNSGIEGPV) form a disordered region. Residues 206-252 (PPCLMLLPTELKLKILELLPGVSIGYMACVCTEMRYLASDNDLWEHK) enclose the F-box domain.

This is Putative F-box protein At1g23770 from Arabidopsis thaliana (Mouse-ear cress).